Reading from the N-terminus, the 349-residue chain is Secretory carrier-associated membrane protein 3 (349 aa).

The tract at residues 1–90 (MAQSRDTGNP…EPRNYGSYST (90 aa)) is disordered. The Cytoplasmic portion of the chain corresponds to 1 to 168 (MAQSRDTGNP…PQEFQKTVST (168 aa)). Ser32 is modified (phosphoserine). Thr37 carries the post-translational modification Phosphothreonine. A phosphotyrosine mark is found at Tyr41 and Tyr53. Residues 49 to 68 (PPPAYEPPAPAPAPLPPPSA) show a composition bias toward pro residues. Ser74 and Ser78 each carry phosphoserine. Position 85 is a phosphotyrosine (Tyr85). The residue at position 87 (Ser87) is a Phosphoserine. 4 helical membrane-spanning segments follow: residues 169 to 189 (MYYL…ACLA), 200 to 220 (GFGL…VCWY), 236 to 256 (FVFF…AIGI), and 277 to 297 (VAVL…LGIV). The Cytoplasmic portion of the chain corresponds to 298–349 (MLKRIHSLYRQTGASFQKAQQEFAAGVFSNPAVRTAAANAAAGAAENAFRAP). A Glycyl lysine isopeptide (Lys-Gly) (interchain with G-Cter in SUMO1) cross-link involves residue Lys315.

It belongs to the SCAMP family. As to quaternary structure, interacts with NEDD4 and NEDD4L and TSG101. Interacts with RNF126. Post-translationally, monoubiquitinated.

The protein resides in the membrane. Functions in post-Golgi recycling pathways. Acts as a recycling carrier to the cell surface. The polypeptide is Secretory carrier-associated membrane protein 3 (Scamp3) (Mus musculus (Mouse)).